The chain runs to 99 residues: Small integral membrane protein 14 (99 aa).

The Lumenal portion of the chain corresponds to 1-49 (MAEGGFDPCECVCSHEHAMRRLINLLRQSQSYCTDTECLQELPGPSGDN). Residues 50–70 (GISVTMILVAWMVIALILFLL) form a helical membrane-spanning segment. Residues 71–99 (RPPNLRGSSLPGKPTSPHNGQDPPAPPVD) are Cytoplasmic-facing. Positions 78 to 99 (SSLPGKPTSPHNGQDPPAPPVD) are disordered.

It is found in the endoplasmic reticulum membrane. The polypeptide is Small integral membrane protein 14 (SMIM14) (Homo sapiens (Human)).